Consider the following 186-residue polypeptide: Elongation factor P (186 aa).

This sequence belongs to the elongation factor P family.

It is found in the cytoplasm. Its pathway is protein biosynthesis; polypeptide chain elongation. Functionally, involved in peptide bond synthesis. Stimulates efficient translation and peptide-bond synthesis on native or reconstituted 70S ribosomes in vitro. Probably functions indirectly by altering the affinity of the ribosome for aminoacyl-tRNA, thus increasing their reactivity as acceptors for peptidyl transferase. This chain is Elongation factor P, found in Beutenbergia cavernae (strain ATCC BAA-8 / DSM 12333 / CCUG 43141 / JCM 11478 / NBRC 16432 / NCIMB 13614 / HKI 0122).